We begin with the raw amino-acid sequence, 560 residues long: Membrane protein insertase YidC (560 aa).

The next 6 membrane-spanning stretches (helical) occupy residues 5–25 (IINLIAAIILSLSIIFGWQYF), 334–354 (AIDFGWFYIITKPVFYAMNFF), 357–377 (YVGNFGVSILIVTVIIKLLMF), 431–451 (LPILVQIPVFFSIYKVLYVTI), 476–496 (LFGLLPFSPPLFLMIGAWPIL), and 522–542 (FMPLIFLFMFSSFPVGLLIYW).

This sequence belongs to the OXA1/ALB3/YidC family. Type 1 subfamily. Interacts with the Sec translocase complex via SecD. Specifically interacts with transmembrane segments of nascent integral membrane proteins during membrane integration.

The protein resides in the cell inner membrane. Its function is as follows. Required for the insertion and/or proper folding and/or complex formation of integral membrane proteins into the membrane. Involved in integration of membrane proteins that insert both dependently and independently of the Sec translocase complex, as well as at least some lipoproteins. Aids folding of multispanning membrane proteins. The polypeptide is Membrane protein insertase YidC (Rickettsia africae (strain ESF-5)).